The primary structure comprises 513 residues: Anthranilate synthase component 1 (513 aa).

Residues Ser-50 and 279-281 each bind L-tryptophan; that span reads PYM. A chorismate-binding site is contributed by 314-315; sequence GT. Glu-341 lines the Mg(2+) pocket. Chorismate-binding positions include Tyr-429, Arg-449, 463–465, and Gly-465; that span reads GAG. Glu-478 is a binding site for Mg(2+).

The protein belongs to the anthranilate synthase component I family. As to quaternary structure, heterotetramer consisting of two non-identical subunits: a beta subunit (TrpG) and a large alpha subunit (TrpE). The cofactor is Mg(2+).

It catalyses the reaction chorismate + L-glutamine = anthranilate + pyruvate + L-glutamate + H(+). Its pathway is amino-acid biosynthesis; L-tryptophan biosynthesis; L-tryptophan from chorismate: step 1/5. Feedback inhibited by tryptophan. Part of a heterotetrameric complex that catalyzes the two-step biosynthesis of anthranilate, an intermediate in the biosynthesis of L-tryptophan. In the first step, the glutamine-binding beta subunit (TrpG) of anthranilate synthase (AS) provides the glutamine amidotransferase activity which generates ammonia as a substrate that, along with chorismate, is used in the second step, catalyzed by the large alpha subunit of AS (TrpE) to produce anthranilate. In the absence of TrpG, TrpE can synthesize anthranilate directly from chorismate and high concentrations of ammonia. The protein is Anthranilate synthase component 1 (trpE) of Bacillus pumilus (Bacillus mesentericus).